We begin with the raw amino-acid sequence, 179 residues long: Transcriptional repressor NrdR (179 aa).

A zinc finger spans residues 3–34 (CPYCQHTNSRVLESRSSEGGQSIRRRRECLCC). The 91-residue stretch at 49–139 (ITVIKHDGKK…VYGRFQGIKD (91 aa)) folds into the ATP-cone domain. Positions 160-179 (KPANDDFSEQETPSTVMMPS) are disordered. Residues 169–179 (QETPSTVMMPS) are compositionally biased toward polar residues.

It belongs to the NrdR family. Zn(2+) serves as cofactor.

Negatively regulates transcription of bacterial ribonucleotide reductase nrd genes and operons by binding to NrdR-boxes. The sequence is that of Transcriptional repressor NrdR from Rippkaea orientalis (strain PCC 8801 / RF-1) (Cyanothece sp. (strain PCC 8801)).